A 212-amino-acid chain; its full sequence is Thymidylate kinase (212 aa).

Ala2 bears the N-acetylalanine mark. ATP is bound by residues 16 to 21 and Arg97; that span reads RAGKST. An LID region spans residues 133–157; it reads LQLQLADAAKRGAFGHERYENGAFQ. An N6-acetyllysine modification is found at Lys169. ATP-binding residues include Lys182 and Arg192.

The protein belongs to the thymidylate kinase family. In terms of assembly, homodimer. Mg(2+) is required as a cofactor.

It carries out the reaction dTMP + ATP = dTDP + ADP. The protein operates within pyrimidine metabolism; dTTP biosynthesis. In terms of biological role, catalyzes the phosphorylation of thymidine monophosphate (dTMP) to thymidine diphosphate (dTDP), the immediate precursor for the DNA building block dTTP, with ATP as the preferred phosphoryl donor in the presence of Mg(2+). This is Thymidylate kinase (DTYMK) from Homo sapiens (Human).